Here is a 220-residue protein sequence, read N- to C-terminus: GTP-binding nuclear protein GSP2/CNR2 (220 aa).

The residue at position 2 (S2) is an N-acetylserine. S2 carries the post-translational modification Phosphoserine. The 165-residue stretch at 10 to 174 (EVPTFKLVLV…LWLARKLAGN (165 aa)) folds into the Small GTPase Ran-type domain. 21–28 (DGGTGKTT) provides a ligand contact to GTP. A switch-I region spans residues 40 to 48 (KKYIATIGV). GTP is bound by residues G71, 125–128 (NKVD), and 153–155 (SAK). The interval 71–87 (GQEKFGGLRDGYYINAQ) is switch-II.

The protein belongs to the small GTPase superfamily. Ran family. Found in a nuclear export complex with RanGTP, exportin and pre-miRNA.

It is found in the nucleus. Functionally, GTP-binding protein involved in nucleocytoplasmic transport. Required for the import of protein into the nucleus and also for RNA export. Not essential for cell viability. This is GTP-binding nuclear protein GSP2/CNR2 (GSP2) from Saccharomyces cerevisiae (strain ATCC 204508 / S288c) (Baker's yeast).